The primary structure comprises 217 residues: Trimethylamine corrinoid protein 2 (217 aa).

A B12-binding N-terminal domain is found at 1–92; sequence MAGKEEIIAK…EMEKRKAKTT (92 aa). A B12-binding domain is found at 94–217; sequence LGTVIIGTIE…VNKIKAAIKS (124 aa). Histidine 107 is a methylcob(III)alamin binding site.

Belongs to the methylamine corrinoid protein family. Can form a complex with MttB.

It participates in one-carbon metabolism; methanogenesis from trimethylamine. Functionally, acts probably as a methyl group carrier between MttB and either MtbA or MtaA. This is Trimethylamine corrinoid protein 2 (mttC2) from Methanosarcina acetivorans (strain ATCC 35395 / DSM 2834 / JCM 12185 / C2A).